A 111-amino-acid chain; its full sequence is Class I hydrophobin SC4 (111 aa).

The signal sequence occupies residues 1-25; the sequence is MRFSLALLALPALAAAAPVPGGGKG. 4 disulfides stabilise this stretch: cysteine 30–cysteine 37, cysteine 38–cysteine 72, cysteine 86–cysteine 92, and cysteine 93–cysteine 106. A glycan (N-linked (GlcNAc...) asparagine) is linked at asparagine 39.

The protein belongs to the fungal hydrophobin family. In terms of assembly, self-assembles to form functional amyloid fibrils called rodlets. Self-assembly into fibrillar rodlets occurs spontaneously at hydrophobic:hydrophilic interfaces and the rodlets further associate laterally to form amphipathic monolayers.

The protein resides in the secreted. It localises to the cell wall. Aerial growth, conidiation, and dispersal of filamentous fungi in the environment rely upon a capability of their secreting small amphipathic proteins called hydrophobins (HPBs) with low sequence identity. Class I can self-assemble into an outermost layer of rodlet bundles on aerial cell surfaces, conferring cellular hydrophobicity that supports fungal growth, development and dispersal; whereas Class II form highly ordered films at water-air interfaces through intermolecular interactions but contribute nothing to the rodlet structure. SC4 is a dikaryon-specific class I hydrophobin that contributes to the formation of aerial hyphae and fruiting bodies. Plays a role within fruiting bodies by preventing gas channels filling with water under wet conditions, probably serving uninterrupted gas exchange. SC4 cannot fully substitute for SC3. Involved in the unusual characteristic of mounds to adhere to and completely envelop adjacent fruiting bodies on mosaic colonies. The protein is Class I hydrophobin SC4 of Schizophyllum commune (Split gill fungus).